Here is a 435-residue protein sequence, read N- to C-terminus: MEEELKNLIKVSVSVIISISYCYYVPTRIKPGIFRFLSVLPICALFRVLPLFFASVHLSGYTALFISWLANFKLILFSFNQGPLFPLPSNLTRFICFACFPIKLQQNPKRRDYFFQWEYPIEVLFSNQFVTKVVILSVVLHMYNHIQHIYPIVLFVLYPLHLYLVLEILLKLFNAFFSIALDCELEPQLNEPYLAYSLRDFWGHWWTLMLPTILLPDVYARMRRITEGKMNSENALYLGVFVTFLVSGALHEFLFFYITRERPTGEVTLFFVLHGVCIVAYDARLKKKIARWIGFEFCPCLILQVMVMGFVVVTAGWLFFPPLVRTGKIQRFANEALLFIGFVRNLFNESLFFMRKFFNEALFFTGFVMRKLFNGALFFIGFVKLKLFNESSLFFIMRKLFNEAMFFIGFVIRKLFNEAMFFIGFVKLKLFTFGW.

Transmembrane regions (helical) follow at residues 7 to 27, 36 to 56, 59 to 79, 120 to 140, 149 to 169, 200 to 220, 238 to 258, 263 to 283, 300 to 320, 363 to 383, and 406 to 426; these read NLIKVSVSVIISISYCYYVPT, FLSVLPICALFRVLPLFFASV, SGYTALFISWLANFKLILFSF, PIEVLFSNQFVTKVVILSVVL, IYPIVLFVLYPLHLYLVLEIL, DFWGHWWTLMLPTILLPDVYA, LGVFVTFLVSGALHEFLFFYI, PTGEVTLFFVLHGVCIVAYDA, CLILQVMVMGFVVVTAGWLFF, FFTGFVMRKLFNGALFFIGFV, and FFIGFVIRKLFNEAMFFIGFV.

Belongs to the wax synthase family.

The protein localises to the membrane. The catalysed reaction is a long chain fatty alcohol + a fatty acyl-CoA = a wax ester + CoA. Functionally, catalyzes the final step in the synthesis of long-chain linear esters (waxes). The polypeptide is Probable long-chain-alcohol O-fatty-acyltransferase 11 (Arabidopsis thaliana (Mouse-ear cress)).